Reading from the N-terminus, the 107-residue chain is Putative double-stranded DNA mimic protein HS_0995 (107 aa).

The protein belongs to the putative dsDNA mimic protein family.

In terms of biological role, may act as a double-stranded DNA (dsDNA) mimic. Probably regulates the activity of a dsDNA-binding protein. This chain is Putative double-stranded DNA mimic protein HS_0995, found in Histophilus somni (strain 129Pt) (Haemophilus somnus).